Reading from the N-terminus, the 173-residue chain is RNA polymerase sigma factor YlaC (173 aa).

Belongs to the sigma-70 factor family. ECF subfamily.

Its function is as follows. Sigma factors are initiation factors that promote the attachment of RNA polymerase to specific initiation sites and are then released. This sigma factor contributes to oxidative stress resistance. The sequence is that of RNA polymerase sigma factor YlaC (ylaC) from Bacillus subtilis (strain 168).